The primary structure comprises 163 residues: K88 minor fimbrial subunit FaeF (163 aa).

The first 22 residues, 1 to 22 (MKKTMMAAALVLSALSIQSALA), serve as a signal peptide directing secretion.

It localises to the fimbrium. Its function is as follows. K88 minor fimbrial subunit, plays an essential role in the biogenesis of the K88 fimbriae. required at some step in the initiation and/or elongation of the K88 fimbriae. This chain is K88 minor fimbrial subunit FaeF (faeF), found in Escherichia coli.